The chain runs to 177 residues: Large ribosomal subunit protein uL6 (177 aa).

It belongs to the universal ribosomal protein uL6 family. In terms of assembly, part of the 50S ribosomal subunit.

Functionally, this protein binds to the 23S rRNA, and is important in its secondary structure. It is located near the subunit interface in the base of the L7/L12 stalk, and near the tRNA binding site of the peptidyltransferase center. This chain is Large ribosomal subunit protein uL6, found in Haemophilus ducreyi (strain 35000HP / ATCC 700724).